A 289-amino-acid chain; its full sequence is Homeobox protein Nkx-2.6 (289 aa).

Disordered stretches follow at residues 75–125 and 259–289; these read GSNP…PQRK and TPLA…VTAW. The homeobox DNA-binding region spans 123 to 182; sequence QRKSRVLFSQAQVLALERRFKQQRYLTAPEREHLASALQLTSTQVKIWFQNRRYKSKSQR. The segment covering 261–274 has biased composition (polar residues); sequence LASSGFSPGGQSAA.

Belongs to the NK-2 homeobox family. As to expression, not detected in any neonate or adult tissues.

It localises to the nucleus. Its function is as follows. Acts as a transcriptional activator. In conjunction with NKX2-5, may play a role in both pharyngeal and cardiac embryonic development. This is Homeobox protein Nkx-2.6 (Nkx2-6) from Mus musculus (Mouse).